The primary structure comprises 298 residues: Anamorsin homolog (298 aa).

The tract at residues 1–143 (MTQLIITYQS…IKAEKPSWKP (143 aa)) is N-terminal SAM-like domain. The tract at residues 143–162 (PEEGKVLVDDIDLEGSVPDI) is linker. Residues Cys175, Cys182, Cys185, and Cys187 each coordinate [2Fe-2S] cluster. The interval 175 to 187 (CKSKERACNNCNC) is fe-S binding site A. Residues Cys218, Cys221, Cys229, and Cys232 each coordinate [4Fe-4S] cluster. Short sequence motifs (cx2C motif) lie at residues 218-221 (CGNC) and 229-232 (CSGC). A fe-S binding site B region spans residues 218-232 (CGNCYLGDAFRCSGC).

Belongs to the anamorsin family. Monomer. [2Fe-2S] cluster serves as cofactor. It depends on [4Fe-4S] cluster as a cofactor.

It localises to the cytoplasm. The protein resides in the mitochondrion intermembrane space. Component of the cytosolic iron-sulfur (Fe-S) protein assembly (CIA) machinery. Required for the maturation of extramitochondrial Fe-S proteins. Part of an electron transfer chain functioning in an early step of cytosolic Fe-S biogenesis, facilitating the de novo assembly of a [4Fe-4S] cluster on the cytosolic Fe-S scaffold complex. Electrons are transferred from NADPH via a FAD- and FMN-containing diflavin oxidoreductase. Together with the diflavin oxidoreductase, also required for the assembly of the diferric tyrosyl radical cofactor of ribonucleotide reductase (RNR), probably by providing electrons for reduction during radical cofactor maturation in the catalytic small subunit. This is Anamorsin homolog from Cryptosporidium hominis.